The primary structure comprises 212 residues: Glycerol-3-phosphate acyltransferase (212 aa).

The next 5 helical transmembrane spans lie at 3 to 23 (LILL…LWIG), 69 to 89 (LLPM…FFAI), 110 to 130 (AGIL…IFFF), 143 to 163 (VIAA…HFLL), and 165 to 185 (DYDF…IIRH).

It belongs to the PlsY family. In terms of assembly, probably interacts with PlsX.

Its subcellular location is the cell membrane. It carries out the reaction an acyl phosphate + sn-glycerol 3-phosphate = a 1-acyl-sn-glycero-3-phosphate + phosphate. Its pathway is lipid metabolism; phospholipid metabolism. In terms of biological role, catalyzes the transfer of an acyl group from acyl-phosphate (acyl-PO(4)) to glycerol-3-phosphate (G3P) to form lysophosphatidic acid (LPA). This enzyme utilizes acyl-phosphate as fatty acyl donor, but not acyl-CoA or acyl-ACP. In Streptococcus mutans serotype c (strain ATCC 700610 / UA159), this protein is Glycerol-3-phosphate acyltransferase.